The primary structure comprises 169 residues: Transcription antitermination protein NusB (169 aa).

Basic and acidic residues predominate over residues Met1–Lys19. The tract at residues Met1–Arg22 is disordered.

It belongs to the NusB family.

Its function is as follows. Involved in transcription antitermination. Required for transcription of ribosomal RNA (rRNA) genes. Binds specifically to the boxA antiterminator sequence of the ribosomal RNA (rrn) operons. This Rhodopseudomonas palustris (strain BisB18) protein is Transcription antitermination protein NusB.